The sequence spans 485 residues: NADH-quinone oxidoreductase subunit N (485 aa).

A run of 14 helical transmembrane segments spans residues 8–28 (LIAL…MLSI), 35–55 (FLNA…LWFV), 75–95 (LYTG…YPWL), 105–125 (FYLL…ANHL), 127–147 (ALFL…GYAF), 159–179 (YTIL…LVYA), 203–223 (LLAG…LVPF), 235–255 (PAPV…GVVM), 271–291 (VVLG…ALSQ), 297–317 (LLGY…IALQ), 326–346 (VGVY…VVSL), 374–394 (AVMT…GFIG), 408–430 (WWLV…RVAV), and 455–475 (IVVL…QPLI).

It belongs to the complex I subunit 2 family. In terms of assembly, NDH-1 is composed of 13 different subunits. Subunits NuoA, H, J, K, L, M, N constitute the membrane sector of the complex.

It is found in the cell inner membrane. It carries out the reaction a quinone + NADH + 5 H(+)(in) = a quinol + NAD(+) + 4 H(+)(out). In terms of biological role, NDH-1 shuttles electrons from NADH, via FMN and iron-sulfur (Fe-S) centers, to quinones in the respiratory chain. The immediate electron acceptor for the enzyme in this species is believed to be ubiquinone. Couples the redox reaction to proton translocation (for every two electrons transferred, four hydrogen ions are translocated across the cytoplasmic membrane), and thus conserves the redox energy in a proton gradient. The chain is NADH-quinone oxidoreductase subunit N from Klebsiella pneumoniae (strain 342).